The following is a 332-amino-acid chain: Eukaryotic translation initiation factor 3 subunit I (332 aa).

WD repeat units lie at residues glycine 8–histidine 47, glycine 48–threonine 87, aspartate 144–serine 182, and glycine 279–methionine 318.

Belongs to the eIF-3 subunit I family. As to quaternary structure, component of the eukaryotic translation initiation factor 3 (eIF-3) complex.

The protein localises to the cytoplasm. Functionally, component of the eukaryotic translation initiation factor 3 (eIF-3) complex, which is involved in protein synthesis of a specialized repertoire of mRNAs and, together with other initiation factors, stimulates binding of mRNA and methionyl-tRNAi to the 40S ribosome. The eIF-3 complex specifically targets and initiates translation of a subset of mRNAs involved in cell proliferation. The sequence is that of Eukaryotic translation initiation factor 3 subunit I from Phaeosphaeria nodorum (strain SN15 / ATCC MYA-4574 / FGSC 10173) (Glume blotch fungus).